Reading from the N-terminus, the 45-residue chain is Photosystem II reaction center protein K (45 aa).

A propeptide spanning residues 1–8 (MLMSLFLA) is cleaved from the precursor. The chain crosses the membrane as a helical span at residues 23 to 43 (ILPIIPLFFLLLAFVWQAAIG).

Belongs to the PsbK family. In terms of assembly, PSII is composed of 1 copy each of membrane proteins PsbA, PsbB, PsbC, PsbD, PsbE, PsbF, PsbH, PsbI, PsbJ, PsbK, PsbL, PsbM, PsbT, PsbX, PsbY, PsbZ, Psb30/Ycf12, at least 3 peripheral proteins of the oxygen-evolving complex and a large number of cofactors. It forms dimeric complexes.

The protein localises to the plastid. It localises to the cyanelle thylakoid membrane. Functionally, one of the components of the core complex of photosystem II (PSII). PSII is a light-driven water:plastoquinone oxidoreductase that uses light energy to abstract electrons from H(2)O, generating O(2) and a proton gradient subsequently used for ATP formation. It consists of a core antenna complex that captures photons, and an electron transfer chain that converts photonic excitation into a charge separation. This Cyanophora paradoxa protein is Photosystem II reaction center protein K.